Here is a 171-residue protein sequence, read N- to C-terminus: 3-hydroxydecanoyl-[acyl-carrier-protein] dehydratase (171 aa).

The active site involves H70.

The protein belongs to the thioester dehydratase family. FabA subfamily. As to quaternary structure, homodimer.

It localises to the cytoplasm. It carries out the reaction a (3R)-hydroxyacyl-[ACP] = a (2E)-enoyl-[ACP] + H2O. The catalysed reaction is (3R)-hydroxydecanoyl-[ACP] = (2E)-decenoyl-[ACP] + H2O. The enzyme catalyses (2E)-decenoyl-[ACP] = (3Z)-decenoyl-[ACP]. It participates in lipid metabolism; fatty acid biosynthesis. Functionally, necessary for the introduction of cis unsaturation into fatty acids. Catalyzes the dehydration of (3R)-3-hydroxydecanoyl-ACP to E-(2)-decenoyl-ACP and then its isomerization to Z-(3)-decenoyl-ACP. Can catalyze the dehydratase reaction for beta-hydroxyacyl-ACPs with saturated chain lengths up to 16:0, being most active on intermediate chain length. This chain is 3-hydroxydecanoyl-[acyl-carrier-protein] dehydratase, found in Shewanella sediminis (strain HAW-EB3).